Here is a 784-residue protein sequence, read N- to C-terminus: uncharacterized protein (784 aa).

The region spanning 422–619 (IRIVQNEQDL…EVFQKIVEVV (198 aa)) is the 3'-5' exonuclease domain.

This is an uncharacterized protein from Caenorhabditis elegans.